We begin with the raw amino-acid sequence, 462 residues long: Argininosuccinate lyase (462 aa).

The protein belongs to the lyase 1 family. Argininosuccinate lyase subfamily.

The protein localises to the cytoplasm. The catalysed reaction is 2-(N(omega)-L-arginino)succinate = fumarate + L-arginine. Its pathway is amino-acid biosynthesis; L-arginine biosynthesis; L-arginine from L-ornithine and carbamoyl phosphate: step 3/3. This is Argininosuccinate lyase from Streptococcus agalactiae serotype III (strain NEM316).